Reading from the N-terminus, the 892-residue chain is Alpha-actinin-1 (892 aa).

N-acetylmethionine is present on Met-1. Residues 1 to 247 (MDHYDSQQTN…IMTYVSSFYH (247 aa)) form an actin-binding region. The residue at position 6 (Ser-6) is a Phosphoserine. Residue Tyr-12 is modified to Phosphotyrosine; by FAK1. 2 consecutive Calponin-homology (CH) domains span residues 31–135 (KQQR…LRFA) and 144–250 (TSAK…HAFS). 2 positions are modified to N6-acetyllysine: Lys-95 and Lys-195. Spectrin repeat units lie at residues 274-384 (QLME…WLLN), 394-499 (HLAE…ALER), 509-620 (QLYL…ALTE), and 630-733 (RLRK…EVEN). The tract at residues 274 to 733 (QLMEDYEKLA…IARTINEVEN (460 aa)) is interaction with DDN. Residue Ser-471 is modified to Phosphoserine. Residue Lys-676 is modified to N6-acetyllysine. A Phosphoserine modification is found at Ser-677. EF-hand domains follow at residues 746 to 781 (EQMNEFRASFNHFDRDHSGTLGPEEFKACLISLGYD) and 787 to 822 (QGEAEFARIMSIVDPNRLGVVTFQAFIDFMSRETAD). Ca(2+) contacts are provided by Asp-759, Asp-761, Ser-763, Thr-765, and Glu-770. Ser-890 carries the post-translational modification Phosphoserine.

This sequence belongs to the alpha-actinin family. As to quaternary structure, homodimer; antiparallel. Interacts with MYOZ2, TTID and LPP. Interacts with DDN. Interacts with PSD. Interacts with MICALL2. Interacts with DNM2 and CTTN. Interacts with PDLIM1. Interacts with PDLIM2. Interacts with PDLIM4 (via PDZ domain). Interacts with IGSF8.

The protein resides in the cytoplasm. It is found in the cytoskeleton. The protein localises to the myofibril. Its subcellular location is the sarcomere. It localises to the z line. The protein resides in the cell membrane. It is found in the cell junction. The protein localises to the cell projection. Its subcellular location is the ruffle. In terms of biological role, F-actin cross-linking protein which is thought to anchor actin to a variety of intracellular structures. Association with IGSF8 regulates the immune synapse formation and is required for efficient T-cell activation. This is Alpha-actinin-1 (ACTN1) from Macaca fascicularis (Crab-eating macaque).